Here is a 369-residue protein sequence, read N- to C-terminus: Chanoclavine-I aldehyde reductase fgaOx3 (369 aa).

FMN contacts are provided by residues 23–25, Ala58, Gln100, and His169; that span reads PMT. Substrate-binding residues include His169 and Asn172. Residue Tyr174 is the Proton donor of the active site. FMN-binding positions include Gly292, 316–317, and Arg317; that span reads GR. Residue Tyr344 coordinates substrate.

It belongs to the NADH:flavin oxidoreductase/NADH oxidase family. Monomer. FMN serves as cofactor.

The enzyme catalyses dihydrochanoclavine-I aldehyde + NADP(+) = chanoclavine-I aldehyde + NADPH + H(+). Its pathway is alkaloid biosynthesis; ergot alkaloid biosynthesis. In terms of biological role, chanoclavine-I aldehyde reductase; part of the gene cluster that mediates the biosynthesis of isofumigaclavines, fungal ergot alkaloids. The tryptophan dimethylallyltransferase ifgA catalyzes the first step of ergot alkaloid biosynthesis by condensing dimethylallyl diphosphate (DMAP) and tryptophan to form 4-dimethylallyl-L-tryptophan. The second step is catalyzed by the methyltransferase ifgB that methylates 4-dimethylallyl-L-tryptophan in the presence of S-adenosyl-L-methionine, resulting in the formation of N-methyl-dimethylallyl-L-tryptophan. The catalase ifgD and the FAD-dependent oxidoreductase ifgC then transform N-methyl-dimethylallyl-L-tryptophan to chanoclavine-I which is further oxidized by ifgE in the presence of NAD(+), resulting in the formation of chanoclavine-I aldehyde. The chanoclavine-I aldehyde reductases ifgG and/or fgaOx3 reduce chanoclavine-I aldehyde to dihydrochanoclavine-I aldehyde that spontaneously dehydrates to form 6,8-dimethyl-6,7-didehydroergoline. The festuclavine dehydrogenases ifgF1 and/or ifgF2 then catalyze the reduction of 6,8-dimethyl-6,7-didehydroergoline to form festuclavine. Hydrolysis of festuclavine by a yet undetermined cytochrome P450 monooxygenase (called ifgH) then leads to the formation of isofumigaclavine B which is in turn acetylated by ifgI to isofumigaclavine A. Penicillium roqueforti has interestingly at least two sets of genes for the consumption of chanoclavine-I aldehyde on three different loci, the OYEs ifgG/fgaOx3 and the festuclavine synthase homologs ifgF1/ifgF2. The reason for the duplication of these genes is unclear, probably to ensure the conversion of chanoclavine-I aldehyde by differential gene expression under various environmental conditions. The protein is Chanoclavine-I aldehyde reductase fgaOx3 of Penicillium roqueforti (strain FM164).